Reading from the N-terminus, the 234-residue chain is Probable transcriptional regulatory protein TcrX (234 aa).

One can recognise a Response regulatory domain in the interval 10-124; sequence TVLVVDDEPV…EVVLRLRALL (115 aa). Asp-59 is subject to 4-aspartylphosphate. Residues 135-232 constitute a DNA-binding region (ompR/PhoB-type); the sequence is GAQLVVGDLV…LRGAGYVLKP (98 aa).

In terms of processing, phosphorylated by TcrY.

Its subcellular location is the cytoplasm. Its function is as follows. Member of the two-component regulatory system TcrY/TcrX. The sequence is that of Probable transcriptional regulatory protein TcrX (tcrX) from Mycobacterium tuberculosis (strain ATCC 25618 / H37Rv).